The chain runs to 346 residues: Uroporphyrinogen decarboxylase (346 aa).

Substrate is bound by residues 26 to 30, Phe45, Asp76, Tyr153, Ser208, and His323; that span reads RQAGR.

It belongs to the uroporphyrinogen decarboxylase family. In terms of assembly, homodimer.

The protein localises to the cytoplasm. It catalyses the reaction uroporphyrinogen III + 4 H(+) = coproporphyrinogen III + 4 CO2. It functions in the pathway porphyrin-containing compound metabolism; protoporphyrin-IX biosynthesis; coproporphyrinogen-III from 5-aminolevulinate: step 4/4. Functionally, catalyzes the decarboxylation of four acetate groups of uroporphyrinogen-III to yield coproporphyrinogen-III. The polypeptide is Uroporphyrinogen decarboxylase (Prochlorococcus marinus subsp. pastoris (strain CCMP1986 / NIES-2087 / MED4)).